Reading from the N-terminus, the 355-residue chain is Molybdenum import ATP-binding protein ModC (355 aa).

In terms of domain architecture, ABC transporter spans 1–233 (MTLIVEAKQR…PSAAADRKEA (233 aa)). 31–38 (GRSGSGKT) is an ATP binding site. The Mop domain maps to 291–355 (GLSALNILEG…AIIKTVALEG (65 aa)).

This sequence belongs to the ABC transporter superfamily. Molybdate importer (TC 3.A.1.8) family. In terms of assembly, the complex is composed of two ATP-binding proteins (ModC), two transmembrane proteins (ModB) and a solute-binding protein (ModA).

The protein localises to the cell inner membrane. The catalysed reaction is molybdate(out) + ATP + H2O = molybdate(in) + ADP + phosphate + H(+). In terms of biological role, part of the ABC transporter complex ModABC involved in molybdenum import. Responsible for energy coupling to the transport system. In Rhizobium etli (strain ATCC 51251 / DSM 11541 / JCM 21823 / NBRC 15573 / CFN 42), this protein is Molybdenum import ATP-binding protein ModC.